A 4545-amino-acid polypeptide reads, in one-letter code: Prolow-density lipoprotein receptor-related protein 1 (4545 aa).

The first 19 residues, 1 to 19, serve as a signal peptide directing secretion; the sequence is MLTPPLLLLLPLLSALVSG. Residues 20-4424 are Extracellular-facing; it reads ATMDAPKTCS…SQQQPGHMAS (4405 aa). 2 consecutive LDL-receptor class A domains span residues 26–67 and 71–111; these read KTCS…ICPQ and QRCP…HCRE. Intrachain disulfides connect Cys-28/Cys-41, Cys-35/Cys-54, Cys-48/Cys-65, Cys-73/Cys-86, Cys-80/Cys-99, and Cys-93/Cys-109. Positions 112–150 constitute an EGF-like 1 domain; sequence LRANCSRMGCQHHCVPTPSGPTCYCNSSFQLQADGKTCK. An N-linked (GlcNAc...) asparagine glycan is attached at Asn-115. 6 disulfides stabilise this stretch: Cys-116–Cys-125, Cys-121–Cys-134, Cys-136–Cys-149, Cys-155–Cys-165, Cys-161–Cys-174, and Cys-176–Cys-189. N-linked (GlcNAc...) asparagine glycosylation is present at Asn-137. Residues 151–190 form the EGF-like 2; calcium-binding domain; that stretch reads DFDECSVYGTCSQLCTNTDGSFTCGCVEGYLLQPDNRSCK. Asn-186, Asn-240, and Asn-275 each carry an N-linked (GlcNAc...) asparagine glycan. LDL-receptor class B repeat units follow at residues 293–335, 336–379, and 380–423; these read GNFY…DPAM, GKVF…DLVS, and RLVY…FENY. Asn-358 carries an N-linked (GlcNAc...) asparagine glycan. N-linked (GlcNAc...) asparagine glycosylation occurs at Asn-447. The EGF-like 3 domain occupies 475-521; it reads RSHACENDQYGKPGGCSDICLLANSHKARTCRCRSGFSLGSDGKSCK. 3 cysteine pairs are disulfide-bonded: Cys-479-Cys-494, Cys-490-Cys-505, and Cys-507-Cys-520. LDL-receptor class B repeat units lie at residues 572–614, 615–660, 661–711, and 712–755; these read GFIY…DWMG, DNLY…DPLN, GWMY…DIPA, and GRLY…HGNY. Asn-730 is a glycosylation site (N-linked (GlcNAc...) asparagine). The EGF-like 4 domain maps to 804–844; that stretch reads GTNKCRVNNGGCSSLCLATPGSRQCACAEDQVLDTDGVTCL. Intrachain disulfides connect Cys-808/Cys-819, Cys-815/Cys-828, Cys-830/Cys-843, Cys-855/Cys-867, Cys-862/Cys-880, Cys-874/Cys-891, Cys-896/Cys-908, Cys-903/Cys-921, Cys-915/Cys-932, Cys-937/Cys-949, Cys-944/Cys-962, Cys-956/Cys-972, Cys-977/Cys-990, Cys-985/Cys-1003, Cys-997/Cys-1012, Cys-1016/Cys-1028, Cys-1023/Cys-1041, Cys-1035/Cys-1052, Cys-1063/Cys-1076, Cys-1070/Cys-1089, Cys-1083/Cys-1098, Cys-1105/Cys-1119, Cys-1113/Cys-1132, Cys-1126/Cys-1141, Cys-1146/Cys-1160, Cys-1153/Cys-1173, Cys-1167/Cys-1183, Cys-1186/Cys-1197, Cys-1193/Cys-1207, Cys-1209/Cys-1222, Cys-1228/Cys-1238, Cys-1234/Cys-1247, and Cys-1249/Cys-1262. 8 consecutive LDL-receptor class A domains span residues 853-893, 894-934, 935-974, 975-1014, 1014-1054, 1061-1100, 1103-1143, and 1144-1183; these read PQCQ…LCHQ, HTCP…TCSA, RTCPPNQFSCASGRCIPISWTCDLDDDCGDRSDESASCAY, PTCFPLTQFTCNNGRCININWRCDNDNDCGDNSDEAGCSH, HSCS…NCTN, GGCHSDEFQCRLDGLCIPLRWRCDGDTDCMDSSDEKSCEG, HVCD…NCEA, and LACRPPSHPCANNTSVCLPPDKLCDGKDDCGDGSDEGELC. Positions 872, 875, 877, 879, 885, and 886 each coordinate Ca(2+). Asn-929 carries an N-linked (GlcNAc...) asparagine glycan. Ca(2+) is bound by residues Trp-1033, Asp-1036, Asp-1038, Asp-1040, Asp-1046, and Glu-1047. Residue Asn-1051 is glycosylated (N-linked (GlcNAc...) asparagine). Ca(2+) is bound by residues Trp-1081, Asp-1084, Asp-1086, Asp-1088, Asp-1094, and Glu-1095. 2 N-linked (GlcNAc...) asparagine glycosylation sites follow: Asn-1155 and Asn-1156. EGF-like domains follow at residues 1184–1223 and 1224–1263; these read DQCSLNNGGCSHNCSVAPGEGIVCSCPLGMELGSDNHTCQ and IQSYCAKHLKCSQKCDQNKFSVKCSCYEGWVLEPDGESCR. Asn-1196 and Asn-1219 each carry an N-linked (GlcNAc...) asparagine glycan. LDL-receptor class B repeat units follow at residues 1310–1356, 1357–1399, 1400–1446, 1447–1491, and 1492–1532; these read SALY…DWIA, GNIY…DPRD, GILF…DYLE, KRIL…YGGE, and VYWT…YHPS. N-linked (GlcNAc...) asparagine glycosylation occurs at Asn-1512. In terms of domain architecture, EGF-like 7 spans 1537 to 1580; sequence APNPCEANGGRGPCSHLCLINYNRTVSCACPHLMKLHKDNTTCY. 3 disulfide bridges follow: Cys-1541–Cys-1554, Cys-1550–Cys-1564, and Cys-1566–Cys-1579. 4 N-linked (GlcNAc...) asparagine glycosylation sites follow: Asn-1559, Asn-1576, Asn-1617, and Asn-1646. LDL-receptor class B repeat units lie at residues 1628 to 1670, 1671 to 1714, 1715 to 1754, and 1755 to 1799; these read QRVY…DWVS, RNLF…HPLR, GKLYWTDGDNISMANMDGSNHTLLFSGQKGPVGLAIDFPE, and SKLY…MGDK. N-linked (GlcNAc...) asparagine glycans are attached at residues Asn-1724, Asn-1734, Asn-1764, and Asn-1826. The EGF-like 8 domain maps to 1847–1888; it reads GTNPCSVNNGDCSQLCLPTSETTRSCMCTAGYSLRSGQQACE. Cystine bridges form between Cys-1851/Cys-1862, Cys-1858/Cys-1872, and Cys-1874/Cys-1887. N-linked (GlcNAc...) asparagine glycosylation is present at Asn-1934. LDL-receptor class B repeat units lie at residues 1935 to 1977, 1978 to 2020, 2021 to 2064, and 2065 to 2108; these read DTIY…DWIA, GNIY…HPEK, GYLF…DYQG, and GKLY…FEDF. Asn-1996 is a glycosylation site (N-linked (GlcNAc...) asparagine). Lys-2010 is subject to N6-acetyllysine. Asn-2049 carries N-linked (GlcNAc...) asparagine glycosylation. Asn-2118 and Asn-2128 each carry an N-linked (GlcNAc...) asparagine glycan. The EGF-like 9 domain occupies 2156 to 2196; the sequence is GTNVCAVANGGCQQLCLYRGGGQRACACAHGMLAEDGASCR. 3 cysteine pairs are disulfide-bonded: Cys-2160/Cys-2171, Cys-2167/Cys-2181, and Cys-2183/Cys-2195. 5 LDL-receptor class B repeats span residues 2254 to 2295, 2296 to 2344, 2345 to 2389, 2390 to 2432, and 2433 to 2474; these read NRIF…HRGW, DTLY…DECQ, NLMF…DHRA, EKLY…YGEH, and IFWT…VAND. Asn-2473 carries an N-linked (GlcNAc...) asparagine glycan. The region spanning 2479-2519 is the EGF-like 10 domain; sequence ELSPCRINNGGCQDLCLLTHQGHVNCSCRGGRILQEDFTCR. 3 disulfide bridges follow: Cys-2483/Cys-2494, Cys-2490/Cys-2504, and Cys-2506/Cys-2518. N-linked (GlcNAc...) asparagine glycosylation occurs at Asn-2503. N-linked (GlcNAc...) asparagine glycosylation occurs at Asn-2522. LDL-receptor class A domains lie at 2523–2564, 2565–2603, 2604–2642, 2643–2691, 2695–2733, 2733–2772, and 2773–2815; these read SSCR…YCNS, RRCKKTFRQCNNGRCVSNMLWCNGVDDCGDGSDEIPCNK, TACGVGEFRCRDGSCIGNSSRCNQFVDCEDASDEMNCSA, TDCS…DCPG, PRCPLNYFACPSGRCIPMSWTCDKEDDCENGEDETHCNK, KFCSEAQFECQNHRCISKQWLCDGSDDCGDGSDEAAHCEG, and KTCG…GCLY. Intrachain disulfides connect Cys-2525-Cys-2538, Cys-2533-Cys-2551, Cys-2545-Cys-2562, Cys-2567-Cys-2579, Cys-2574-Cys-2592, and Cys-2586-Cys-2601. Asn-2602 carries an N-linked (GlcNAc...) asparagine glycan. Disulfide bonds link Cys-2606/Cys-2618, Cys-2613/Cys-2631, Cys-2625/Cys-2640, Cys-2645/Cys-2667, Cys-2661/Cys-2680, Cys-2674/Cys-2689, Cys-2697/Cys-2709, Cys-2704/Cys-2722, Cys-2716/Cys-2731, Cys-2735/Cys-2747, Cys-2742/Cys-2760, Cys-2754/Cys-2770, Cys-2775/Cys-2788, Cys-2782/Cys-2801, and Cys-2795/Cys-2813. N-linked (GlcNAc...) asparagine glycosylation is found at Asn-2621 and Asn-2639. Asn-2816 carries N-linked (GlcNAc...) asparagine glycosylation. LDL-receptor class A domains are found at residues 2817–2856, 2857–2900, and 2903–2941; these read STCDDREFMCQNRLCIPKHFVCDHDRDCADGSDESPECEY, PTCG…HCTS, and HKCNASSQFLCSSGRCVAEALLCNGQDDCGDGSDERGCH. Disulfide bonds link Cys-2819–Cys-2831, Cys-2826–Cys-2844, Cys-2838–Cys-2854, Cys-2859–Cys-2871, Cys-2866–Cys-2885, Cys-2879–Cys-2898, Cys-2905–Cys-2918, Cys-2913–Cys-2931, Cys-2925–Cys-2940, Cys-2945–Cys-2957, Cys-2953–Cys-2966, Cys-2968–Cys-2981, Cys-2987–Cys-2997, Cys-2993–Cys-3006, and Cys-3008–Cys-3022. The N-linked (GlcNAc...) asparagine glycan is linked to Asn-2906. Residues 2942-2982 enclose the EGF-like 11 domain; that stretch reads VNECLSRKLSGCSQDCEDLKIGFKCRCRPGFRLKDDGRTCA. Residues 2983 to 3023 enclose the EGF-like 12; calcium-binding domain; that stretch reads DLDECSTTFPCSQLCINTHGSYKCLCVEGYAPRGGDPHSCK. N-linked (GlcNAc...) asparagine glycosylation is found at Asn-3049 and Asn-3090. LDL-receptor class B repeat units follow at residues 3070–3114, 3115–3157, 3158–3201, 3202–3244, and 3245–3285; these read QMIY…DWVG, GNLY…DVQN, GYLY…DYVT, ERIY…FEDY, and VYWT…FHAL. Asn-3265 carries N-linked (GlcNAc...) asparagine glycosylation. In terms of domain architecture, EGF-like 13 spans 3291 to 3332; that stretch reads PNHPCKVNNGGCSNLCLLSPGGGHKCACPTNFYLGGDGRTCV. 3 disulfide bridges follow: Cys-3295/Cys-3306, Cys-3302/Cys-3316, and Cys-3318/Cys-3331. LDL-receptor class A domains lie at 3333–3372, 3373–3411, 3412–3451, 3452–3492, 3493–3534, 3535–3573, 3574–3612, 3612–3650, 3653–3693, 3694–3734, and 3740–3779; these read SNCTASQFVCKNDKCIPFWWKCDTEDDCGDHSDEPPDCPE, FKCRPGQFQCSTGICTNPAFICDGDNDCQDNSDEANCDI, HVCLPSQFKCTNTNRCIPGIFRCNGQDNCGDGEDERDCPE, VTCA…NCTQ, MTCG…ECDE, RTCEPYQFRCKNNRCVPGRWQCDYDNDCGDNSDEESCTP, RPCSESEFSCANGRCIAGRWKCDGDHDCADGSDEKDCTP, PRCDMDQFQCKSGHCIPLRWRCDADADCMDGSDEEACGT, RTCP…ECAR, FICP…DCEP, and PHCKDKKEFLCRNQRCLSSSLRCNMFDDCGDGSDEEDCSI. N-linked (GlcNAc...) asparagine glycosylation occurs at Asn-3334. 39 disulfide bridges follow: Cys-3335/Cys-3347, Cys-3342/Cys-3360, Cys-3354/Cys-3370, Cys-3375/Cys-3387, Cys-3382/Cys-3400, Cys-3394/Cys-3409, Cys-3414/Cys-3427, Cys-3421/Cys-3440, Cys-3434/Cys-3449, Cys-3454/Cys-3467, Cys-3461/Cys-3480, Cys-3474/Cys-3490, Cys-3495/Cys-3508, Cys-3502/Cys-3521, Cys-3515/Cys-3532, Cys-3537/Cys-3549, Cys-3544/Cys-3562, Cys-3556/Cys-3571, Cys-3576/Cys-3588, Cys-3583/Cys-3601, Cys-3595/Cys-3610, Cys-3614/Cys-3626, Cys-3621/Cys-3639, Cys-3633/Cys-3648, Cys-3655/Cys-3667, Cys-3662/Cys-3680, Cys-3674/Cys-3691, Cys-3696/Cys-3710, Cys-3704/Cys-3723, Cys-3717/Cys-3732, Cys-3742/Cys-3755, Cys-3750/Cys-3768, Cys-3762/Cys-3777, Cys-3786/Cys-3799, Cys-3793/Cys-3808, Cys-3810/Cys-3823, Cys-3829/Cys-3839, Cys-3835/Cys-3848, and Cys-3850/Cys-3861. The N-linked (GlcNAc...) asparagine glycan is linked to Asn-3489. Asn-3663 is a glycosylation site (N-linked (GlcNAc...) asparagine). EGF-like domains follow at residues 3782–3824 and 3825–3862; these read KLTS…PGCQ and DINECLRFGTCSQLCNNTKGGHLCSCARNFMKTHNTCK. N-linked (GlcNAc...) asparagine glycosylation occurs at Asn-3789. Residue Asn-3840 is glycosylated (N-linked (GlcNAc...) asparagine). LDL-receptor class B repeat units follow at residues 3913–3955, 3971–4013, 4014–4057, and 4058–4102; these read GRVY…HLNI, GNVY…DPLR, GTMY…DYHN, and ERLY…FEDY. A Recognition site for proteolytical processing motif is present at residues 3941-3944; sequence RHRR. Asn-3954 carries N-linked (GlcNAc...) asparagine glycosylation. N-linked (GlcNAc...) asparagine glycans are attached at residues Asn-4076 and Asn-4126. EGF-like domains follow at residues 4148 to 4184, 4197 to 4233, 4233 to 4269, 4269 to 4305, 4305 to 4341, 4341 to 4376, and 4374 to 4410; these read VTNPCDRKKCEWLCLLSPSGPVCTCPNGKRLDNGTCV, RPGTCTLQCFNGGSCFLNARRQPKCRCQPRYTGDKCE, ELDQCWEYCHNGGTCAASPSGMPTCRCPTGFTGPKCT, TAQVCAGYCSNNSTCTVNQGNQPQCRCLPGFLGDRCQ, QYRQCSGFCENFGTCQMAADGSRQCRCTVYFEGPRCE, EVNKCSRCLQGACVVNKQTGDVTCNCTDGRVAPSCL, and SCLTCIDHCSNGGSCTMNSKMMPECQCPPHMTGPRCE. Intrachain disulfides connect Cys-4152–Cys-4161, Cys-4157–Cys-4170, Cys-4172–Cys-4183, Cys-4201–Cys-4211, Cys-4205–Cys-4221, Cys-4223–Cys-4232, Cys-4237–Cys-4247, Cys-4241–Cys-4257, Cys-4259–Cys-4268, Cys-4273–Cys-4283, Cys-4277–Cys-4293, Cys-4295–Cys-4304, Cys-4309–Cys-4319, Cys-4313–Cys-4329, Cys-4331–Cys-4340, Cys-4345–Cys-4353, and Cys-4348–Cys-4364. Residue Asn-4180 is glycosylated (N-linked (GlcNAc...) asparagine). N-linked (GlcNAc...) asparagine glycosylation is found at Asn-4279 and Asn-4280. Asn-4365 carries an N-linked (GlcNAc...) asparagine glycan. Disulfide bonds link Cys-4366–Cys-4375, Cys-4378–Cys-4388, Cys-4382–Cys-4398, and Cys-4400–Cys-4409. The helical transmembrane segment at 4425 to 4445 threads the bilayer; it reads ILIPLLLLLLLLLVAGVVFWY. The Cytoplasmic portion of the chain corresponds to 4446–4545; the sequence is KRRVRGAKGF…PEDEIGDPLA (100 aa). Residues 4446–4545 form an interaction with MAFB region; that stretch reads KRRVRGAKGF…PEDEIGDPLA (100 aa). The residue at position 4461 (Thr-4461) is a Phosphothreonine. An NPXY motif motif is present at residues 4503–4508; that stretch reads FTNPVY. Phosphotyrosine is present on Tyr-4508. A phosphoserine mark is found at Ser-4518, Ser-4521, and Ser-4524.

The protein belongs to the LDLR family. In terms of assembly, heterodimer of an 85-kDa membrane-bound carboxyl subunit and a non-covalently attached 515-kDa N-terminal subunit. Intracellular domain interacts with MAFB. Found in a complex with PID1/PCLI1, LRP1 and CUBNI. Interacts with SNX17, PID1/PCLI1, PDGF and CUBN. The intracellular domain interacts with SHC1, GULP1 and DAB1. Can weakly interact (via NPXY motif) with DAB2 (via PID domain); the interaction is enhanced by tyrosine phosphorylation of the NPXY motif. Interacts with MDK; promotes neuronal survival. Interacts with LRPAP1; this interaction is followed by rapid internalization. Interacts with uPA/PLAU and PAI1/SERPINE1, either individually or in complex with each other, leading to rapid endocytosis; this interaction is abolished in the presence of LRPAP1/RAP. Also interacts with tPA/PLAT alone or in complex with SERPINE1. Interacts with the urokinase receptor PLAUR; this interaction leads to PLAUR internalization and is impaired in the presence of SORL1. Interacts with PDGFB. Interacts with TAU/MAPT, leading to endocytosis; this interaction is reduced in the presence of LRPAP1/RAP. Interacts with IGFBP3. Interacts with ADGRG6. In terms of processing, phosphorylated on serine and threonine residues. Post-translationally, phosphorylated on tyrosine residues upon stimulation with PDGF. Tyrosine phosphorylation promotes interaction with SHC1. Cleaved into a 85 kDa membrane-spanning subunit (LRP-85) and a 515 kDa large extracellular domain (LRP-515) that remains non-covalently associated. Gamma-secretase-dependent cleavage of LRP-85 releases the intracellular domain from the membrane.

It localises to the cell membrane. It is found in the membrane. Its subcellular location is the coated pit. The protein localises to the golgi outpost. The protein resides in the cytoplasm. It localises to the cytoskeleton. It is found in the microtubule organizing center. Its subcellular location is the nucleus. Its function is as follows. Endocytic receptor involved in endocytosis and in phagocytosis of apoptotic cells. Required for early embryonic development. Involved in cellular lipid homeostasis. Involved in the plasma clearance of chylomicron remnants and activated LRPAP1 (alpha 2-macroglobulin), as well as the local metabolism of complexes between plasminogen activators and their endogenous inhibitors. Acts as an alpha-2-macroglobulin receptor. Acts as a TAU/MAPT receptor and controls the endocytosis of TAU/MAPT as well as its subsequent spread. May modulate cellular events, such as APP metabolism, kinase-dependent intracellular signaling, neuronal calcium signaling as well as neurotransmission. Also acts as a receptor for IGFBP3 to mediate cell growth inhibition. In terms of biological role, (Microbial infection) Functions as a receptor for Vibrio cholerae cholix toxin and for Pseudomonas aeruginosa exotoxin A. The chain is Prolow-density lipoprotein receptor-related protein 1 from Mus musculus (Mouse).